A 226-amino-acid polypeptide reads, in one-letter code: Orotate phosphoribosyltransferase (226 aa).

Lys29 lines the 5-phospho-alpha-D-ribose 1-diphosphate pocket. 37–38 (FF) is an orotate binding site. Residues 75–76 (YK), Arg101, Lys102, Lys105, His107, and 126–134 (DDVISAGTS) contribute to the 5-phospho-alpha-D-ribose 1-diphosphate site. The orotate site is built by Ser130 and Arg158.

The protein belongs to the purine/pyrimidine phosphoribosyltransferase family. PyrE subfamily. In terms of assembly, homodimer. Mg(2+) is required as a cofactor.

It catalyses the reaction orotidine 5'-phosphate + diphosphate = orotate + 5-phospho-alpha-D-ribose 1-diphosphate. The protein operates within pyrimidine metabolism; UMP biosynthesis via de novo pathway; UMP from orotate: step 1/2. Its function is as follows. Catalyzes the transfer of a ribosyl phosphate group from 5-phosphoribose 1-diphosphate to orotate, leading to the formation of orotidine monophosphate (OMP). The sequence is that of Orotate phosphoribosyltransferase from Ralstonia nicotianae (strain ATCC BAA-1114 / GMI1000) (Ralstonia solanacearum).